An 87-amino-acid polypeptide reads, in one-letter code: Small ribosomal subunit protein bS20 (87 aa).

Basic residues predominate over residues 1–12 (MANHKSALKRNR). Residues 1 to 21 (MANHKSALKRNRQAAVRNARN) form a disordered region.

The protein belongs to the bacterial ribosomal protein bS20 family.

In terms of biological role, binds directly to 16S ribosomal RNA. The polypeptide is Small ribosomal subunit protein bS20 (Syntrophotalea carbinolica (strain DSM 2380 / NBRC 103641 / GraBd1) (Pelobacter carbinolicus)).